Consider the following 1170-residue polypeptide: Protein SCAR4 (1170 aa).

7 disordered regions span residues 180–207, 356–376, 631–674, 701–742, 783–819, 960–980, and 1026–1046; these read KLGKDKRLRQSKKKGSHTTIKETPEDSR, NDADSPASTESEVKEAGSDDK, AAPK…PRDL, SYSG…NQTG, NQRQESPSETGSANSRTSSDESPPTQNGSVGVQSSPL, EESKATEEQSPSGVNGTSDTY, and HNNPHPAKLEEEEPQVDHPLE. Over residues 183-195 the composition is skewed to basic residues; that stretch reads KDKRLRQSKKKGS. The segment covering 198–207 has biased composition (basic and acidic residues); the sequence is TIKETPEDSR. The segment covering 356-365 has biased composition (polar residues); the sequence is NDADSPASTE. Positions 366–376 are enriched in basic and acidic residues; that stretch reads SEVKEAGSDDK. Composition is skewed to polar residues over residues 640–668, 701–716, 783–818, and 967–980; these read SQDGSSMNPAQSKHISTSEISSENGTLMS, SYSGQEDPQTMSIVSD, NQRQESPSETGSANSRTSSDESPPTQNGSVGVQSSP, and EQSPSGVNGTSDTY. Residues 1105–1123 form the WH2 domain; it reads ENDSLLEIIRSKSFNLRPA.

This sequence belongs to the SCAR/WAVE family. In terms of assembly, interacts with SPK1. As to expression, expressed in expanding cotyledons, expanding leaves and expanding siliques containing developing embryos. Detected in unopened flower buds and in the expanding tip region of roots. Reduced expression in mature leaves.

The protein localises to the cytoplasm. The protein resides in the cytoskeleton. Involved in regulation of actin and microtubule organization. Part of a WAVE complex that activates the Arp2/3 complex. Regulates trichome branch positioning and expansion. The protein is Protein SCAR4 (SCAR4) of Arabidopsis thaliana (Mouse-ear cress).